A 606-amino-acid chain; its full sequence is Leucine-rich repeat and immunoglobulin-like domain-containing nogo receptor-interacting protein 2 (606 aa).

The signal sequence occupies residues 1-27; the sequence is MLHTAIPCWQPFLGLAVVLLLMGSTIG. In terms of domain architecture, LRRNT spans 28-57; the sequence is CPARCECSAQNKSVSCHRRRLLAIPEGIPI. The Extracellular segment spans residues 28 to 545; that stretch reads CPARCECSAQ…LDLKTILVST (518 aa). Asn-38 is a glycosylation site (N-linked (GlcNAc...) asparagine). 12 LRR repeats span residues 58-79, 82-103, 106-127, 130-151, 154-175, 178-199, 202-223, 226-247, 250-271, 274-295, 298-319, and 322-343; these read ETKILDLSKNRLKSINPEEFIS, LLEEIDLSDNIIANVEPGAFNN, NLRSLRLKGNRLKLVPLGVFTG, NLTKLDISENKIVILLDYMFQD, NLKSLEVGDNDLVYISHRAFSG, SLEQLTLEKCNLTAVPTEALSH, SLIALHLKHLNINNMPVYAFKR, HLKNLEIDYWPLLDLMPANSLY, NLTSLSITNTNLSTVPFLAFKH, YLTHLNLSYNPISTIEAGMFSD, RLQELHIVGAQLRTIEPHSFQG, and FLRVLNVSQNLLETLEENVFSS. N-linked (GlcNAc...) asparagine glycosylation is present at Asn-130. Asn-188 carries N-linked (GlcNAc...) asparagine glycosylation. Residues Asn-250, Asn-260, and Asn-279 are each glycosylated (N-linked (GlcNAc...) asparagine). Asn-327 carries an N-linked (GlcNAc...) asparagine glycan. The region spanning 355–409 is the LRRCT domain; the sequence is NPLACDCRLLWLLQRQPNLQFGGQQPMCAGPDTIRERSFKDFHSTALSFYFTCKK. Residues Cys-432 and Cys-483 are joined by a disulfide bond. Asn-491, Asn-522, and Asn-527 each carry an N-linked (GlcNAc...) asparagine glycan. Residues 546-566 traverse the membrane as a helical segment; sequence AMGCFTFLGVVLFCFLLLFVW. Topologically, residues 567–606 are cytoplasmic; the sequence is SRGKGKHKNSIDLEYVPRKNNGAVVEGEVAGPRRFNMKMI.

The protein localises to the membrane. The polypeptide is Leucine-rich repeat and immunoglobulin-like domain-containing nogo receptor-interacting protein 2 (Lingo2) (Mus musculus (Mouse)).